A 255-amino-acid polypeptide reads, in one-letter code: Flap endonuclease Xni (255 aa).

D105 lines the Mg(2+) pocket. Residues 162-254 (EHKQFIDYLA…LKQFRLPKAN (93 aa)) form the 5'-3' exonuclease domain. L172, A173, P181, V183, and I186 together coordinate K(+). An interaction with DNA region spans residues 185-190 (GIGPKS).

This sequence belongs to the Xni family. It depends on Mg(2+) as a cofactor. The cofactor is K(+).

Its function is as follows. Has flap endonuclease activity. During DNA replication, flap endonucleases cleave the 5'-overhanging flap structure that is generated by displacement synthesis when DNA polymerase encounters the 5'-end of a downstream Okazaki fragment. This chain is Flap endonuclease Xni, found in Shewanella piezotolerans (strain WP3 / JCM 13877).